A 1184-amino-acid polypeptide reads, in one-letter code: MAGPQRATSGLPTRRTTTRQPTRRAGSAIPERQTSTASPAVSTKTAAISRTRTLKSPGEPASVLAKRKERDIEREINEDTSIHVVVRCRGRNEREVKENSGVVLQTEGVKGKTVELSMGPNAVSNKTYTFDKVFSAAADQITVYEDVVLPIVTEMLAGYNCTIFAYGQTGTGKTYTMSGDMTDTLGILSDNAGIIPRVLYSLFAKLADTESTVKCSFIELYNEELRDLLSAEENPKLKIYDNEQKKGHMSTLVQGMEETYIDSATAGIKLLQQGSHKRQVAATKCNDLSSRSHTVFTITVNIKRTTESGEEYVCPGKLNLVDLAGSENIGRSGAENKRATEAGLINKSLLTLGRVINALVDKSQHIPYRESKLTRLLQDSLGGRTKTCIIATISPARSNLEETISTLDYAFRAKNIRNKPQINSTMPKMTLLREFTAEIEKLKAELIATRHRNGVYMSVESYEEMKMENESRRIISEEQRAKIESMESSLRHKVQELLTLTSKFNDLKKDNDDTLAALCSTNDVLQQTDIVLQNTRAQLEEEEMLRCAHEETEHQLQDVGKGLISTLGQTVEDINSLQSKLDRKAELDATNAELWRASSTEVSDVTKRIDQRVEAFQTRHAKLLETTSVKVNEFIATEISNIERTRSDLSEYNRSLDAACNNAKAETSSAHEDMNNVLEEIKDLREEVKSKVGEGLNGLSAAAARISEEVIGEFTQLHSQLHTSFNNLGKDLKSIFETMATHLSEQKNEINRLRAELQSSNRQNIETTHKASAHLAQAIEEEHVAAEAEREILMSQIKALVEESRQKQFARLRAKIDGVRTEISASGDMLEQATTQHDRQIDEWVFKSEQFAKDVNASKDEIRTKLQNDWEAFDQRNSTIRKATESVHKETVRIVDVQVDDMGRQMEALDDFVAKARSQNGRYRDAHIATLDTIATGVRDSYSSIEGRVENLTGRMNQFQQEATHHHATLEESIAPLSNDVRKPLTDLSSSFQNRSLEEYVATGVTPKKRKYDYISVLPSTESHEVLKSRLRTTKEMEVLPFNSDDQLSGPSSSPGGSPSKGFVYNDVEDEVGTHAPTVTNVNPSNTGLREVDANVAARPLVYSTGEKSTDQDGSPVVSPDSATEAEGMNGPPSKRRRSNSVVADTKLPNKMLARRMAGMMEGRENVPPPGISNGRRLRGRPSP.

Positions 1–11 (MAGPQRATSGL) are enriched in polar residues. The interval 1–64 (MAGPQRATSG…KSPGEPASVL (64 aa)) is disordered. Positions 12 to 24 (PTRRTTTRQPTRR) are enriched in low complexity. Over residues 32-51 (RQTSTASPAVSTKTAAISRT) the composition is skewed to polar residues. The 336-residue stretch at 81 to 416 (SIHVVVRCRG…LDYAFRAKNI (336 aa)) folds into the Kinesin motor domain. 167–174 (GQTGTGKT) provides a ligand contact to ATP. Positions 489-900 (SLRHKVQELL…TVRIVDVQVD (412 aa)) form a coiled coil. The segment at 901–1184 (DMGRQMEALD…GRRLRGRPSP (284 aa)) is globular. Threonine 1006 is modified (phosphothreonine; by CDC2). Disordered regions lie at residues 1041–1065 (PFNSDDQLSGPSSSPGGSPSKGFVY) and 1104–1184 (STGE…RPSP). Residues 1049–1060 (SGPSSSPGGSPS) are compositionally biased toward low complexity.

It belongs to the TRAFAC class myosin-kinesin ATPase superfamily. Kinesin family. BimC subfamily.

Its subcellular location is the cytoplasm. It is found in the cytoskeleton. Important role in mitotic dividing cells. Microtubule motor required for spindle body separation. The polypeptide is Kinesin-like protein bimC (bimC) (Emericella nidulans (strain FGSC A4 / ATCC 38163 / CBS 112.46 / NRRL 194 / M139) (Aspergillus nidulans)).